The primary structure comprises 242 residues: ATP-dependent dethiobiotin synthetase BioD (242 aa).

12–17 (SVGKTI) provides a ligand contact to ATP. Thr16 contributes to the Mg(2+) binding site. The active site involves Lys37. Asp66 is a binding site for ATP. Mg(2+) is bound by residues Asp66 and Glu124. ATP is bound at residue 184–185 (NR).

Belongs to the dethiobiotin synthetase family. As to quaternary structure, homodimer. The cofactor is Mg(2+).

The protein resides in the cytoplasm. It catalyses the reaction (7R,8S)-7,8-diammoniononanoate + CO2 + ATP = (4R,5S)-dethiobiotin + ADP + phosphate + 3 H(+). It functions in the pathway cofactor biosynthesis; biotin biosynthesis; biotin from 7,8-diaminononanoate: step 1/2. Its function is as follows. Catalyzes a mechanistically unusual reaction, the ATP-dependent insertion of CO2 between the N7 and N8 nitrogen atoms of 7,8-diaminopelargonic acid (DAPA, also called 7,8-diammoniononanoate) to form a ureido ring. The sequence is that of ATP-dependent dethiobiotin synthetase BioD from Mannheimia succiniciproducens (strain KCTC 0769BP / MBEL55E).